We begin with the raw amino-acid sequence, 438 residues long: UDP-N-acetylmuramoylalanine--D-glutamate ligase (438 aa).

An ATP-binding site is contributed by 115-121; it reads GSNGKST.

The protein belongs to the MurCDEF family.

The protein resides in the cytoplasm. The enzyme catalyses UDP-N-acetyl-alpha-D-muramoyl-L-alanine + D-glutamate + ATP = UDP-N-acetyl-alpha-D-muramoyl-L-alanyl-D-glutamate + ADP + phosphate + H(+). It participates in cell wall biogenesis; peptidoglycan biosynthesis. Its function is as follows. Cell wall formation. Catalyzes the addition of glutamate to the nucleotide precursor UDP-N-acetylmuramoyl-L-alanine (UMA). The protein is UDP-N-acetylmuramoylalanine--D-glutamate ligase of Vibrio atlanticus (strain LGP32) (Vibrio splendidus (strain Mel32)).